The primary structure comprises 495 residues: Pre-glycoprotein polyprotein GP complex (495 aa).

Residue Gly-2 is the site of N-myristoyl glycine; by host attachment. The Extracellular segment spans residues 2–17; that stretch reads GQIITFFQEVPHIIEE. A helical transmembrane segment spans residues 18–33; that stretch reads VMNIVLITLSLLAILK. The Cytoplasmic portion of the chain corresponds to 34–58; that stretch reads GVYNVMTCGLIGLISFLLLCGKSCS. Cys-57 lines the Zn(2+) pocket. The Extracellular portion of the chain corresponds to 59–436; sequence LIYKDTYNFS…QGKTPLGLVD (378 aa). Residues Asn-78, Asn-88, Asn-107, Asn-117, and Asn-165 are each glycosylated (N-linked (GlcNAc...) asparagine; by host). Cystine bridges form between Cys-85–Cys-235, Cys-116–Cys-153, Cys-178–Cys-216, Cys-283–Cys-296, Cys-305–Cys-314, and Cys-368–Cys-389. N-linked (GlcNAc...) asparagine; by host glycosylation is present at Asn-228. 4 N-linked (GlcNAc...) asparagine; by host glycosylation sites follow: Asn-369, Asn-377, Asn-394, and Asn-399. The helical transmembrane segment at 437–457 threads the bilayer; the sequence is LFIFSTSFYSITVFLHLIKIP. Residues 458 to 495 are Cytoplasmic-facing; it reads THRHIVGQGCPKPHRLNSRAICSCGAYKQPGLPTKWKR. Zn(2+) is bound by residues His-459, His-461, Cys-467, His-471, Cys-479, and Cys-481.

The protein belongs to the arenaviridae GPC protein family. In terms of assembly, interacts with glycoprotein G2. Part of the GP complex (GP-C) together with glycoprotein G1 and glycoprotein G2. The GP-complex interacts with protein Z, which interacts with ribonucleocapsid; these interactions may induce virion budding. As to quaternary structure, homotrimer; disulfide-linked. In pre-fusion state, G1 homotrimers bind G2 homotrimers via ionic interactions. Part of the GP complex (GP-C) together with glycoprotein G2 and the stable signal peptide. The GP-complex interacts with protein Z, which interacts with ribonucleocapsid; these interactions may induce virion budding. Homotrimer. Interacts with the stable signal peptide. In pre-fusion state, G2 homotrimers bind G1 homotrimers via ionic interactions. Part of the GP complex (GP-C) together with glycoprotein G1 and the stable signal peptide. Acidification in the endosome triggers rearrangements, which ultimately leads to a 6 helix bundle formed by the two heptad repeat domains (HR1 and HR2) in post-fusion state. The GP-complex interacts with protein Z, which interacts with ribonucleocapsid; these interactions may induce virion budding. In terms of processing, specific enzymatic cleavages in vivo yield mature proteins. GP-C polyprotein is cleaved in the endoplasmic reticulum by the host protease MBTPS1. Only cleaved glycoprotein is incorporated into virions. Post-translationally, the SSP remains stably associated with the GP complex following cleavage by signal peptidase and plays crucial roles in the trafficking of GP through the secretory pathway. Myristoylation is necessary for GP2-mediated fusion activity.

Its subcellular location is the virion membrane. The protein resides in the host endoplasmic reticulum membrane. It is found in the host Golgi apparatus membrane. It localises to the host cell membrane. Functions as a cleaved signal peptide that is retained as the third component of the GP complex (GP-C). Helps to stabilize the spike complex in its native conformation. The SSP is required for efficient glycoprotein expression, post-translational maturation cleavage of G1 and G2, glycoprotein transport to the cell surface plasma membrane, formation of infectious virus particles, and acid pH-dependent glycoprotein-mediated cell fusion. In terms of biological role, forms the virion spikes together with glycoprotein G2. The glycoprotein spike trimers are connected to the underlying matrix. Mediates virus attachment to host receptor alpha-dystroglycan DAG1. This interaction leads to virion entry into the host cell through the endosomal pathway. Functionally, forms the virion spikes together with glycoprotein G1. The glycoprotein spike trimers are connected to the underlying matrix. Class I viral fusion protein that directs fusion of viral and host endosomal membranes, leading to delivery of the nucleocapsid into the cytoplasm. Membrane fusion is mediated by irreversible conformational changes induced by acidification. The polypeptide is Pre-glycoprotein polyprotein GP complex (Ippy mammarenavirus (isolate Rat/Central African Republic/Dak An B 188 d/1970) (IPPYV)).